The following is a 119-amino-acid chain: Polyhedrin (119 aa).

This sequence belongs to the polyhedrin family.

In terms of biological role, major component of the virus occlusion bodies, which are large proteinaceous structures (polyhedra), that protect the virus from the outside environment for extended periods until they are ingested by insect larvae. In Antheraea pernyi nuclear polyhedrosis virus (ApNPV), this protein is Polyhedrin (PH).